The following is a 415-amino-acid chain: Diaminopimelate decarboxylase (415 aa).

Lys60 is subject to N6-(pyridoxal phosphate)lysine. Pyridoxal 5'-phosphate is bound by residues Gly239 and 274-277 (EPGR). Substrate is bound by residues Arg277, Arg313, and Tyr317. Cys344 serves as the catalytic Proton donor. Substrate-binding residues include Glu345 and Tyr372. Tyr372 contacts pyridoxal 5'-phosphate.

Belongs to the Orn/Lys/Arg decarboxylase class-II family. LysA subfamily. Homodimer. The cofactor is pyridoxal 5'-phosphate.

The enzyme catalyses meso-2,6-diaminopimelate + H(+) = L-lysine + CO2. It participates in amino-acid biosynthesis; L-lysine biosynthesis via DAP pathway; L-lysine from DL-2,6-diaminopimelate: step 1/1. Functionally, specifically catalyzes the decarboxylation of meso-diaminopimelate (meso-DAP) to L-lysine. The sequence is that of Diaminopimelate decarboxylase from Haemophilus influenzae (strain ATCC 51907 / DSM 11121 / KW20 / Rd).